Reading from the N-terminus, the 225-residue chain is UPF0758 protein BB3258 (225 aa).

Residues 103–225 form the MPN domain; sequence ALANPDLVRR…TVSMAAQGHL (123 aa). The Zn(2+) site is built by His174, His176, and Asp187. Residues 174–187 carry the JAMM motif motif; it reads HNHPGGTAAASAAD.

This sequence belongs to the UPF0758 family.

The sequence is that of UPF0758 protein BB3258 from Bordetella bronchiseptica (strain ATCC BAA-588 / NCTC 13252 / RB50) (Alcaligenes bronchisepticus).